The following is a 279-amino-acid chain: MHPDDQLKSALRNGFDPKLLYKEPLKTVKEPICTILEKYSKIPLEKVVSHINEVRDRAFAVFPYACIGQFSFVELSIADSPCYAEMLDRTKHGQKLLDLGCAFGQELRQLIFDGAPPTNLYGSDIQQDFLNLGYELFLDRAILPESQLIAADVLDKQSALFSRLSGKINVVYISLFLHVFQYKKQVTVVQNILDLLPAEPGALIVCRVTACRDQGVLNATRERMPYYYHDLASWKRLWEEVESQTGLRLSVETWEQPDELVKNHPLPGIYILGSAIRRL.

Residues 124 to 125 and 152 to 153 each bind S-adenosyl-L-methionine; these read DI and DV.

This sequence belongs to the class I-like SAM-binding methyltransferase superfamily. In terms of assembly, homodimer.

It participates in secondary metabolite biosynthesis; terpenoid biosynthesis. Methyltransferase; part of the gene cluster that mediates the biosynthesis of terretonin, a fungal meroterpenoid that acts as a mycotoxin. The first step of the pathway is the synthesis of 3,5-dimethylorsellinic acid (DMOA) by the polyketide synthase trt4. DMOA is then prenylated into farnesyl-DMOA by the polyprenyl transferase trt2. Methylation by the methyltransferase trt5 then leads to farnesyl-DMOA methyl ester which is further subject to epoxidation by the FAD-dependent monooxygenase trt8 to yield epoxyfarnesyl-DMOA methyl ester. Cyclization of epoxyfarnesyl-DMOA methyl ester by the terpene cyclase trt1 leads to a tetracycle intermediate which is in turn converted to preterretonin. Dehydrogenase trt9 comes next to transform preterretonin to preterrenoid. The FAD-dependent monooxygenase trt3 is then required for the C-hydroxylation at C16 of preterrenoid to yield terrenoid. The cytochrome P450 trt6 catalyzes three successive oxidations to transform terrenoid into an unstable intermediate, which then undergoes the D-ring expansion and unusual rearrangement of the methoxy group to afford the core skeleton of terretonin. Trt14 catalyzes the D-ring expansion of terretonin involving intramolecular methoxy rearrangement as well as the hydrolysis of the expanded D-ring and the methyl ester moiety. Finally, the nonheme iron-dependent dioxygenase trt7 accomplishes the last two oxidation reactions steps to complete the biosynthesis of terretonin. Terretonin C is produced via spontaneous decarboxylation of the terretonin precursor. Another shunt product of the terretonin biosynthesis is dihydrofarnesyl-DMOA, derived from epoxyfarnesyl-DMOA through hydrolysis of the epoxide. The sequence is that of Methyltransferase trt5 from Aspergillus terreus (strain NIH 2624 / FGSC A1156).